Consider the following 114-residue polypeptide: MDPFSQLSQLQQNLQAMTKTVAGLENDMLEVLKENTELKVENQLLREKISKLDANKEPAENKSQAGLKSLRNIYDSGYHICNMYYGSHRESGEDCMFCLDILDNFVNHGQKNRG.

Zn(2+) contacts are provided by His79, Cys81, Cys95, and Cys98.

Belongs to the YabA family. In terms of assembly, homotetramer. Interacts with both DnaA and DnaN, acting as a bridge between these two proteins. The cofactor is Zn(2+).

Its subcellular location is the cytoplasm. The protein resides in the nucleoid. In terms of biological role, involved in control of chromosome replication initiation. Inhibits the cooperative binding of DnaA to the oriC region, thus negatively regulating initiation of chromosome replication. Inhibits the ability of DnaA-ATP to form a helix on DNA; does not disassemble preformed DnaA-DNA helices. Decreases the residence time of DnaA on the chromosome at its binding sites (oriC, replication forks and promoter-binding sites). Tethers DnaA to the replication machinery via the DNA polymerase beta sliding clamp subunit (dnaN). Associates with oriC and other DnaA targets on the chromosome in a DnaA-dependent manner. The protein is Replication initiation control protein YabA of Lactobacillus gasseri (strain ATCC 33323 / DSM 20243 / BCRC 14619 / CIP 102991 / JCM 1131 / KCTC 3163 / NCIMB 11718 / NCTC 13722 / AM63).